Here is a 382-residue protein sequence, read N- to C-terminus: Dual-specificity RNA methyltransferase RlmN (382 aa).

Glu-95 (proton acceptor) is an active-site residue. The Radical SAM core domain occupies 101–349 (EETRGTLCVS…TTVRKTRGDD (249 aa)). Cys-108 and Cys-354 are disulfide-bonded. Cys-115, Cys-119, and Cys-122 together coordinate [4Fe-4S] cluster. S-adenosyl-L-methionine contacts are provided by residues 180 to 181 (GE), Ser-212, 234 to 236 (SLH), and Asn-311. The S-methylcysteine intermediate role is filled by Cys-354.

The protein belongs to the radical SAM superfamily. RlmN family. [4Fe-4S] cluster serves as cofactor.

The protein localises to the cytoplasm. The catalysed reaction is adenosine(2503) in 23S rRNA + 2 reduced [2Fe-2S]-[ferredoxin] + 2 S-adenosyl-L-methionine = 2-methyladenosine(2503) in 23S rRNA + 5'-deoxyadenosine + L-methionine + 2 oxidized [2Fe-2S]-[ferredoxin] + S-adenosyl-L-homocysteine. It catalyses the reaction adenosine(37) in tRNA + 2 reduced [2Fe-2S]-[ferredoxin] + 2 S-adenosyl-L-methionine = 2-methyladenosine(37) in tRNA + 5'-deoxyadenosine + L-methionine + 2 oxidized [2Fe-2S]-[ferredoxin] + S-adenosyl-L-homocysteine. Functionally, specifically methylates position 2 of adenine 2503 in 23S rRNA and position 2 of adenine 37 in tRNAs. m2A2503 modification seems to play a crucial role in the proofreading step occurring at the peptidyl transferase center and thus would serve to optimize ribosomal fidelity. This is Dual-specificity RNA methyltransferase RlmN from Paraburkholderia phymatum (strain DSM 17167 / CIP 108236 / LMG 21445 / STM815) (Burkholderia phymatum).